The sequence spans 156 residues: Cyclic pyranopterin monophosphate synthase (156 aa).

Substrate contacts are provided by residues 73-75 (LCH) and 110-111 (ME). The active site involves D125.

The protein belongs to the MoaC family. As to quaternary structure, homohexamer; trimer of dimers.

It carries out the reaction (8S)-3',8-cyclo-7,8-dihydroguanosine 5'-triphosphate = cyclic pyranopterin phosphate + diphosphate. Its pathway is cofactor biosynthesis; molybdopterin biosynthesis. Functionally, catalyzes the conversion of (8S)-3',8-cyclo-7,8-dihydroguanosine 5'-triphosphate to cyclic pyranopterin monophosphate (cPMP). The polypeptide is Cyclic pyranopterin monophosphate synthase (Pseudomonas putida (strain GB-1)).